The primary structure comprises 286 residues: MTALTESSTSKFVKINEKGFSDFNIHYNEAGNGETVIMLHGGGPGAGGWSNYYRNVGPFVDAGYRVILKDSPGFNKSDAVVMDEQRGLVNARAVKGLMDALGIDRAHLVGNSMGGATALNFAIEYPERIGKLILMGPGGPGPSMFAPMPMEGIKLLFKLYAEPSYENLKQMIQVFLYDQSLITEELLQGRWEAIQRQPEHLKNFLISAQKAPLSTWDVTARLGEIKAKTFITWGRDDRFVPLDHGLKLLWNIDDARLHVFSKCGHWAQWEHADEFNRLAIDFLRQA.

Residues 36-271 (VIMLHGGGPG…KCGHWAQWEH (236 aa)) form the AB hydrolase-1 domain. Residues 42–43 (GG), Asn51, Asn111, Ser180, and Arg190 contribute to the substrate site. His265 functions as the Proton acceptor in the catalytic mechanism. Trp266 contacts substrate.

The protein belongs to the AB hydrolase superfamily. BphD family. Homodimer.

It carries out the reaction 2,6-dioxo-6-phenylhexa-3-enoate + H2O = 2-oxopent-4-enoate + benzoate + H(+). The protein operates within xenobiotic degradation; biphenyl degradation; 2-hydroxy-2,4-pentadienoate and benzoate from biphenyl: step 4/4. In terms of biological role, catalyzes an unusual C-C bond hydrolysis of 2-hydroxy-6-oxo-6-phenylhexa-2,4-dienoic acid (HOPDA) to produce benzoic acid and 2-hydroxy-2,4-pentadienoic acid (HPD). This is 2-hydroxy-6-oxo-6-phenylhexa-2,4-dienoate hydrolase (bphD) from Metapseudomonas furukawaii (Pseudomonas furukawaii).